The primary structure comprises 410 residues: Digeranylgeranylglycerophospholipid reductase (410 aa).

Ala-15, Glu-34, Val-118, Asp-286, Gly-298, and Ile-299 together coordinate FAD. Residues Lys-343 and Ala-379 each contribute to the a 2,3-bis-O-(geranylgeranyl)-sn-glycerol 1-phospholipid site.

Belongs to the geranylgeranyl reductase family. DGGGPL reductase subfamily. The cofactor is FAD.

It catalyses the reaction a 2,3-bis-O-phytanyl-sn-glycerol 1-phospholipid + 8 A = a 2,3-bis-O-(geranylgeranyl)-sn-glycerol 1-phospholipid + 8 AH2. The enzyme catalyses 2,3-bis-O-(phytanyl)-sn-glycerol 1-phosphate + 8 A = 2,3-bis-O-(geranylgeranyl)-sn-glycerol 1-phosphate + 8 AH2. It carries out the reaction CDP-2,3-bis-O-(geranylgeranyl)-sn-glycerol + 8 AH2 = CDP-2,3-bis-O-(phytanyl)-sn-glycerol + 8 A. The catalysed reaction is archaetidylserine + 8 AH2 = 2,3-bis-O-phytanyl-sn-glycero-3-phospho-L-serine + 8 A. The protein operates within membrane lipid metabolism; glycerophospholipid metabolism. Is involved in the reduction of 2,3-digeranylgeranylglycerophospholipids (unsaturated archaeols) into 2,3-diphytanylglycerophospholipids (saturated archaeols) in the biosynthesis of archaeal membrane lipids. Can fully reduce the unsaturated isoprenoid side chains of membrane phospholipids and glycolipids. Is also able to reduce the omega-position isoprene of dolichol phosphate. This chain is Digeranylgeranylglycerophospholipid reductase, found in Haloferax volcanii (strain ATCC 29605 / DSM 3757 / JCM 8879 / NBRC 14742 / NCIMB 2012 / VKM B-1768 / DS2) (Halobacterium volcanii).